Consider the following 270-residue polypeptide: HTH-type transcriptional repressor DrrR1 (270 aa).

Over residues 1–11 (MESGTSRTSDT) the composition is skewed to low complexity. The segment at 1–28 (MESGTSRTSDTGGTGRAGSTETSGSGDI) is disordered. The HTH tetR-type domain occupies 49–109 (TLTLDRVVEA…LMLDRVQRPS (61 aa)). The H-T-H motif DNA-binding region spans 72 to 91 (SMRRVAAELGTGTMSLYRYV).

Its subcellular location is the cytoplasm. Daunorubicin and doxorubicin can induce dissociation of DrrR1 from its DNA complex. Ampicillin cannot release DrrR1 from the DNA complex at the same concentrations. Functionally, transcriptional regulator that modulates the expression of the drrA2-drrB2 genes, which encode an ABC transporter involved in daunorubicin efflux, in response to intracellular daunorubicin/doxorubicin accumulation. In the absence of daunorubicin or doxorubicin, binds directly to the drrA2-drrB2 promoter region and negatively regulates expression of the genes. In the presence of daunorubicin or doxorubicin, DrrR1 dissociates from DNA, leading to the transcription of the genes. The sequence is that of HTH-type transcriptional repressor DrrR1 from Streptomyces coeruleorubidus.